A 263-amino-acid chain; its full sequence is uncharacterized protein (263 aa).

Belongs to the A.longa ORF167/ORF288 family.

It localises to the plastid. This is an uncharacterized protein from Euglena longa (Euglenophycean alga).